The sequence spans 63 residues: Conotoxin Lt11.1 (63 aa).

The signal sequence occupies residues 1-23; sequence MMFRLTSVLLVIVLLNLVVLTNA. 4 disulfides stabilise this stretch: Cys24/Cys34, Cys28/Cys39, Cys33/Cys42, and Cys38/Cys47. Positions 53 to 63 are excised as a propeptide; sequence ALLQRLLGHQR.

Belongs to the conotoxin I2 superfamily. As to expression, expressed by the venom duct.

It is found in the secreted. The protein is Conotoxin Lt11.1 of Conus litteratus (Lettered cone).